Consider the following 108-residue polypeptide: Hrp pili protein HrpA (108 aa).

Residues 41-56 (NTGSTDSIDATRSSIS) are compositionally biased toward polar residues. The segment at 41–73 (NTGSTDSIDATRSSISKGDAKSAELDGTANEEN) is disordered.

The protein belongs to the HrpA type 1 family.

The protein resides in the secreted. It localises to the fimbrium. In terms of biological role, major structural protein of the hrp pilus, which is a component of the type III secretion system (T3SS, Hrp secretion system) required for effector protein delivery, parasitism, and pathogenicity. The hrp pilus functions as a conduit for protein delivery into the host cell. Also, affects the expression of T3SS-associated genes. Required for full expression of genes that encode regulatory, secretion, and effector proteins of the T3SS. HrpA-mediated gene regulation apparently is through effect on the mRNA level of HrpR and HrpS. The sequence is that of Hrp pili protein HrpA (hrpA) from Pseudomonas syringae pv. syringae.